The following is a 330-amino-acid chain: tRNA-modifying protein YgfZ (330 aa).

Folate contacts are provided by Trp28 and Trp192.

Belongs to the tRNA-modifying YgfZ family.

It is found in the cytoplasm. Folate-binding protein involved in regulating the level of ATP-DnaA and in the modification of some tRNAs. It is probably a key factor in regulatory networks that act via tRNA modification, such as initiation of chromosomal replication. This is tRNA-modifying protein YgfZ from Blochmanniella pennsylvanica (strain BPEN).